A 145-amino-acid chain; its full sequence is Partner of bursicon (145 aa).

A signal peptide spans 1-28 (MKENFSIMFIHSIFLILIIFIYSNETIA). 5 disulfide bridges follow: cysteine 36–cysteine 94, cysteine 60–cysteine 109, cysteine 69–cysteine 135, cysteine 73–cysteine 137, and cysteine 91–cysteine 140. The CTCK domain occupies 36–131 (CETLQSEVHI…NGVMEIKIRE (96 aa)).

As to quaternary structure, heterodimer of burs and pburs.

The protein resides in the secreted. Its function is as follows. Final heterodimeric neurohormone released at the end of the molting cycle, involved in the sclerotization (tanning) of the insect cuticle, melanization and wing spreading. The polypeptide is Partner of bursicon (pburs) (Apis mellifera (Honeybee)).